Consider the following 62-residue polypeptide: Dual specificity mitogen-activated protein kinase kinase 3 (62 aa).

Positions 1–62 (GKIAVSIVKA…VAKTMDAGCK (62 aa)) constitute a Protein kinase domain.

The protein belongs to the protein kinase superfamily. STE Ser/Thr protein kinase family. MAP kinase kinase subfamily. Post-translationally, activated by phosphorylation on Ser/Thr catalyzed by MAP kinase kinase kinases.

It catalyses the reaction L-seryl-[protein] + ATP = O-phospho-L-seryl-[protein] + ADP + H(+). The enzyme catalyses L-threonyl-[protein] + ATP = O-phospho-L-threonyl-[protein] + ADP + H(+). It carries out the reaction L-tyrosyl-[protein] + ATP = O-phospho-L-tyrosyl-[protein] + ADP + H(+). Catalyzes the concomitant phosphorylation of a threonine and a tyrosine residue in a Thr-Glu-Tyr sequence located in MAP kinases. This is Dual specificity mitogen-activated protein kinase kinase 3 (map2k3) from Xenopus laevis (African clawed frog).